A 193-amino-acid polypeptide reads, in one-letter code: Ion-translocating oxidoreductase complex subunit A (193 aa).

6 consecutive transmembrane segments (helical) span residues 5–25 (LLLF…FLGL), 47–67 (FVMT…LVPL), 72–92 (LRTL…EMVV), 102–122 (LLGI…VALL), 134–154 (AVYG…FAAI), and 171–191 (SIAL…TGLV).

This sequence belongs to the NqrDE/RnfAE family. As to quaternary structure, the complex is composed of six subunits: RnfA, RnfB, RnfC, RnfD, RnfE and RnfG.

Its subcellular location is the cell inner membrane. Its function is as follows. Part of a membrane-bound complex that couples electron transfer with translocation of ions across the membrane. This Serratia proteamaculans (strain 568) protein is Ion-translocating oxidoreductase complex subunit A.